Consider the following 535-residue polypeptide: Probable inorganic phosphate transporter 1-7 (535 aa).

Over 1–24 the chain is Cytoplasmic; it reads MAGDQLNVLNALDVAKTQWYHFTA. Residues 25–45 form a helical membrane-spanning segment; sequence IIIAGMGFFTDAYDLFCISLV. At 46–70 the chain is on the extracellular side; that stretch reads TKLLGRIYYHVDGSEKPGTLPPNVS. Residues 71–91 traverse the membrane as a helical segment; sequence AAVNGVAFCGTLAGQLFFGWL. At 92–99 the chain is on the cytoplasmic side; sequence GDKLGRKK. A helical transmembrane segment spans residues 100-120; the sequence is VYGMTLMVMVLCSIASGLSFG. Residues 121-131 are Extracellular-facing; sequence SNPKTVMTTLC. Residues 132-152 form a helical membrane-spanning segment; it reads FFRFWLGFGIGGDYPLSATIM. Residues 153 to 161 are Cytoplasmic-facing; it reads SEYANKKTR. The helical transmembrane segment at 162–182 threads the bilayer; that stretch reads GAFIAAVFAMQGFGILTGGIF. Over 183-211 the chain is Extracellular; sequence AIIVSAAFEAKFPAPTYQIDALASTVPQA. The chain crosses the membrane as a helical span at residues 212 to 232; the sequence is DYVWRIILMVGALPAAMTYYS. At 233–289 the chain is on the cytoplasmic side; sequence RSKMPETARYTALVAKDAKLAASNMSKVLQVEIEAEQQGTEDKSNSFGLFSKEFMKR. The helical transmembrane segment at 290–310 threads the bilayer; it reads HGLHLLGTTSTWFLLDIAFYS. The Extracellular segment spans residues 311–345; that stretch reads QNLFQKDIFSAIGWIPPAQTMNAIQEVFKIARAQT. Residues 346-366 form a helical membrane-spanning segment; the sequence is LIALCSTVPGYWFTVAFIDVI. The Cytoplasmic portion of the chain corresponds to 367–368; it reads GR. The chain crosses the membrane as a helical span at residues 369–389; the sequence is FAIQMMGFFFMTVFMFALAIP. Over 390–399 the chain is Extracellular; the sequence is YDHWTHKENR. A helical membrane pass occupies residues 400-420; sequence IGFVAMYSLTFFFANFGPNAT. At 421–438 the chain is on the cytoplasmic side; that stretch reads TFVVPAEIFPARFRSTCH. The chain crosses the membrane as a helical span at residues 439–459; it reads GISAASGKLGAMVGAFGFLYL. The Extracellular segment spans residues 460–480; it reads AQSPDKTKTEHGYPPGIGVKN. A helical transmembrane segment spans residues 481–501; the sequence is SLIVLGVVNLLGMVFTLLVPE. Residues 502–535 are Cytoplasmic-facing; that stretch reads SKGKSLEEMSGENEQNDESSSSSNNNSNNAVSTA. Residues 506–535 form a disordered region; that stretch reads SLEEMSGENEQNDESSSSSNNNSNNAVSTA. Residues 519–535 are compositionally biased toward low complexity; that stretch reads ESSSSSNNNSNNAVSTA. The residue at position 520 (serine 520) is a Phosphoserine.

The protein belongs to the major facilitator superfamily. Phosphate:H(+) symporter (TC 2.A.1.9) family. Mature pollen.

The protein resides in the membrane. In terms of biological role, high-affinity transporter for external inorganic phosphate. The protein is Probable inorganic phosphate transporter 1-7 (PHT1-7) of Arabidopsis thaliana (Mouse-ear cress).